The sequence spans 122 residues: NADH-quinone oxidoreductase subunit A (122 aa).

3 helical membrane-spanning segments follow: residues 10 to 30 (MIVL…LTLG), 66 to 86 (IFAL…PWAV), and 91 to 111 (LGLF…VGLA).

The protein belongs to the complex I subunit 3 family. As to quaternary structure, NDH-1 is composed of 14 different subunits. Subunits NuoA, H, J, K, L, M, N constitute the membrane sector of the complex.

The protein resides in the cell membrane. The enzyme catalyses a quinone + NADH + 5 H(+)(in) = a quinol + NAD(+) + 4 H(+)(out). Functionally, NDH-1 shuttles electrons from NADH, via FMN and iron-sulfur (Fe-S) centers, to quinones in the respiratory chain. The immediate electron acceptor for the enzyme in this species is believed to be a menaquinone. Couples the redox reaction to proton translocation (for every two electrons transferred, four hydrogen ions are translocated across the cytoplasmic membrane), and thus conserves the redox energy in a proton gradient. The chain is NADH-quinone oxidoreductase subunit A from Bacillus cereus (strain ATCC 14579 / DSM 31 / CCUG 7414 / JCM 2152 / NBRC 15305 / NCIMB 9373 / NCTC 2599 / NRRL B-3711).